The primary structure comprises 457 residues: Multidrug resistance protein MdtK (457 aa).

12 helical membrane-spanning segments follow: residues 11-31 (LLAL…MGFV), 53-73 (IWLP…PVIA), 93-113 (WLAG…GYII), 127-147 (AVGY…FQVA), 160-180 (GMVM…IFIY), 188-208 (LGGI…FIAM), 243-263 (LPIA…ALLV), 276-296 (IALN…AAVT), 314-334 (AART…IFTV), 350-370 (VVAL…SDSI), 387-407 (IFFI…YILA), and 418-438 (PAGF…LMML).

This sequence belongs to the multi antimicrobial extrusion (MATE) (TC 2.A.66.1) family. MdtK subfamily.

Its subcellular location is the cell inner membrane. In terms of biological role, multidrug efflux pump that functions probably as a Na(+)/drug antiporter. This is Multidrug resistance protein MdtK from Salmonella enteritidis PT4 (strain P125109).